Reading from the N-terminus, the 320-residue chain is Aspartate carbamoyltransferase catalytic subunit (320 aa).

Carbamoyl phosphate-binding residues include Arg53 and Thr54. Lys82 is an L-aspartate binding site. 3 residues coordinate carbamoyl phosphate: Arg103, His131, and Gln134. 2 residues coordinate L-aspartate: Arg164 and Arg227. Residues Leu266 and Pro267 each contribute to the carbamoyl phosphate site.

This sequence belongs to the aspartate/ornithine carbamoyltransferase superfamily. ATCase family. Heterododecamer (2C3:3R2) of six catalytic PyrB chains organized as two trimers (C3), and six regulatory PyrI chains organized as three dimers (R2).

The catalysed reaction is carbamoyl phosphate + L-aspartate = N-carbamoyl-L-aspartate + phosphate + H(+). It participates in pyrimidine metabolism; UMP biosynthesis via de novo pathway; (S)-dihydroorotate from bicarbonate: step 2/3. Catalyzes the condensation of carbamoyl phosphate and aspartate to form carbamoyl aspartate and inorganic phosphate, the committed step in the de novo pyrimidine nucleotide biosynthesis pathway. This Bifidobacterium adolescentis (strain ATCC 15703 / DSM 20083 / NCTC 11814 / E194a) protein is Aspartate carbamoyltransferase catalytic subunit.